The following is a 353-amino-acid chain: Protein RecA (353 aa).

Position 65–72 (65–72 (GPESSGKT)) interacts with ATP. Basic and acidic residues predominate over residues 334-345 (DAERAGAEREDN). The disordered stretch occupies residues 334 to 353 (DAERAGAEREDNAAADDENF).

This sequence belongs to the RecA family.

It localises to the cytoplasm. In terms of biological role, can catalyze the hydrolysis of ATP in the presence of single-stranded DNA, the ATP-dependent uptake of single-stranded DNA by duplex DNA, and the ATP-dependent hybridization of homologous single-stranded DNAs. It interacts with LexA causing its activation and leading to its autocatalytic cleavage. The polypeptide is Protein RecA (Edwardsiella ictaluri (strain 93-146)).